Consider the following 434-residue polypeptide: Zinc finger CCCH domain-containing protein 10 (434 aa).

The tract at residues 1–37 is disordered; sequence MPDRDSYANGTGSSGGGPGGGGSEEASGAGVGSGGAS. Over residues 12–35 the composition is skewed to gly residues; it reads GSSGGGPGGGGSEEASGAGVGSGG. 3 C3H1-type zinc fingers span residues 36 to 63, 73 to 99, and 134 to 161; these read ASSD…HPDM, KNEF…HGSK, and KEEV…HLQR. Residues Arg185 and Arg186 each carry the omega-N-methylarginine modification. A compositionally biased stretch (basic and acidic residues) spans 196 to 207; the sequence is PDRGFEDHEPGP. The tract at residues 196-217 is disordered; the sequence is PDRGFEDHEPGPKRRRGGCCPP. Residues 234 to 280 adopt a coiled-coil conformation; it reads GVECRLLEEENAMLRKRVEELKKQVSNLLATNEVLLEQNAQFRNQAK. Residues 314–330 are compositionally biased toward polar residues; it reads TTLSSQALQPRPVSQQE. Residues 314-362 form a disordered region; sequence TTLSSQALQPRPVSQQELVAPAGAPAAPPTNAAPPAAPPPPPPHLTPEI. Positions 339–358 are enriched in pro residues; that stretch reads AAPPTNAAPPAAPPPPPPHL.

It is found in the nucleus. Functionally, specific regulator of miRNA biogenesis. Binds, via the C3H1-type zinc finger domains, to the binding motif 5'-GCAGCGC-3' on microRNA pri-MIR143 and negatively regulates the processing to mature microRNA. In Homo sapiens (Human), this protein is Zinc finger CCCH domain-containing protein 10 (ZC3H10).